A 141-amino-acid chain; its full sequence is Large ribosomal subunit protein uL11c (141 aa).

This sequence belongs to the universal ribosomal protein uL11 family. Part of the ribosomal stalk of the 50S ribosomal subunit. Interacts with L10 and the large rRNA to form the base of the stalk. L10 forms an elongated spine to which L12 dimers bind in a sequential fashion forming a multimeric L10(L12)X complex.

Its subcellular location is the plastid. The protein resides in the chloroplast. Forms part of the ribosomal stalk which helps the ribosome interact with GTP-bound translation factors. This chain is Large ribosomal subunit protein uL11c, found in Thalassiosira pseudonana (Marine diatom).